The chain runs to 185 residues: Translation initiation factor IF-3 (185 aa).

It belongs to the IF-3 family. In terms of assembly, monomer.

It localises to the cytoplasm. In terms of biological role, IF-3 binds to the 30S ribosomal subunit and shifts the equilibrium between 70S ribosomes and their 50S and 30S subunits in favor of the free subunits, thus enhancing the availability of 30S subunits on which protein synthesis initiation begins. The protein is Translation initiation factor IF-3 of Streptococcus pneumoniae (strain Hungary19A-6).